The sequence spans 1807 residues: Vitellogenin-A2 (1807 aa).

An N-terminal signal peptide occupies residues 1–15 (MKGIVLALLLALAGS). The 641-residue stretch at 24–664 (FSESKISVYN…SANTMFPVFI (641 aa)) folds into the Vitellogenin domain. Residues 953–974 (TSAEGASMMEDSSEMGPKKYSA) form a disordered region. Residue Asn1094 is glycosylated (N-linked (GlcNAc...) asparagine). The disordered stretch occupies residues 1095–1320 (ETALYRSKQK…SSESSSSSSE (226 aa)). The segment covering 1101–1111 (SKQKKKNKIHN) has biased composition (basic residues). Over residues 1112-1123 (RRLDAEVVEARK) the composition is skewed to basic and acidic residues. Residues 1126 to 1163 (SSLSSSSSSSSSSSSSSSSSSSSSSSSSPSSSSSSSYS) are compositionally biased toward low complexity. The span at 1187-1198 (QNKKRNLQENRK) shows a compositional bias: basic and acidic residues. Low complexity predominate over residues 1205-1232 (SSSSSSSSSSSSSSSSSSSSSSSSSSSS). Residues 1233-1247 (EENRPHKNRQHDNKQ) are compositionally biased toward basic and acidic residues. Low complexity-rich tracts occupy residues 1263 to 1276 (SESS…SSSE) and 1309 to 1320 (SSSSESSSSSSE). The VWFD domain occupies 1536-1714 (GECKVAQDQI…SWILPAESCS (179 aa)). 2 disulfide bridges follow: Cys1538–Cys1677 and Cys1561–Cys1713.

As to expression, produced by the liver, secreted into the blood and then sequestered by receptor mediated endocytosis into growing oocytes, where it is generally cleaved, giving rise to the respective yolk components.

In terms of biological role, precursor of the major egg-yolk proteins that are sources of nutrients during early development of oviparous organisms. This chain is Vitellogenin-A2, found in Xenopus laevis (African clawed frog).